Consider the following 56-residue polypeptide: Serine protease inhibitor Kazal-type 1 (56 aa).

One can recognise a Kazal-like domain in the interval 3–56; sequence LGREAKCNNNAGGCTKIYNPVCGTDGNTYPNECMLCVENQKRQMPVLIQRSGPC. Cystine bridges form between C9–C38, C16–C35, and C24–C56.

The protein resides in the secreted. Its function is as follows. Serine protease inhibitor which exhibits anti-trypsin activity. In the pancreas, protects against trypsin-catalyzed premature activation of zymogens. Functionally, in the male reproductive tract, binds to sperm heads where it modulates sperm capacitance by inhibiting calcium uptake and nitrogen oxide (NO) production. The polypeptide is Serine protease inhibitor Kazal-type 1 (SPINK1) (Equus caballus (Horse)).